Here is a 159-residue protein sequence, read N- to C-terminus: Cytochrome c-type biogenesis protein CcmE (159 aa).

The Cytoplasmic portion of the chain corresponds to 1–8; sequence MNIRRKNR. A helical; Signal-anchor for type II membrane protein transmembrane segment spans residues 9–29; sequence LWIACAVLAGLALTITLVLYA. Over 30–159 the chain is Periplasmic; the sequence is LRSNIDLFYT…PESVYKDKAS (130 aa). His130 and Tyr134 together coordinate heme. Positions 130–159 are disordered; sequence HDENYTPPEVEKAMQENHRRPESVYKDKAS.

Belongs to the CcmE/CycJ family.

Its subcellular location is the cell inner membrane. Its function is as follows. Heme chaperone required for the biogenesis of c-type cytochromes. Transiently binds heme delivered by CcmC and transfers the heme to apo-cytochromes in a process facilitated by CcmF and CcmH. The polypeptide is Cytochrome c-type biogenesis protein CcmE (Citrobacter koseri (strain ATCC BAA-895 / CDC 4225-83 / SGSC4696)).